Reading from the N-terminus, the 218-residue chain is MAGYKADDEYDYLFKLVLIGDSGVGKSNLLSRFTRNEFNLESKSTIGVEFATKSLNIDGKVIKAQIWDTAGQERYRAITSAYYRGAVGALLVYDVTRSTTFETAGRWLKELRDHTDPNIVVMLIGNKSDLRHLVTVSTEDGKAFAEKESLYFMETSALEATNVENAFSEVLTQIYRIVSKRAVEAGDRPSTSVVPSQGQTINVNEDSSVLNRYRCCSN.

A GTP-binding site is contributed by 20–27 (GDSGVGKS). The Effector region signature appears at 42-50 (SKSTIGVEF). GTP contacts are provided by residues 68–72 (DTAGQ) and 126–129 (NKSD). 2 S-geranylgeranyl cysteine lipidation sites follow: Cys215 and Cys216.

This sequence belongs to the small GTPase superfamily. Rab family.

Its subcellular location is the cell membrane. The protein is Ras-related protein Rab11E (RAB11E) of Lotus japonicus (Lotus corniculatus var. japonicus).